Consider the following 387-residue polypeptide: uncharacterized protein (387 aa).

Disordered stretches follow at residues 1–126, 138–169, and 275–298; these read MDGR…GDDE, GNQG…RNEE, and SSIF…AGNK. Over residues 32–45 the composition is skewed to basic and acidic residues; it reads SSDHRTSNSAESKK. 2 stretches are compositionally biased toward polar residues: residues 49 to 63 and 78 to 93; these read SGKS…NNDN and DLSS…SKGT. The span at 155–169 shows a compositional bias: basic and acidic residues; that stretch reads ENGKNDIEKNNRNEE. A compositionally biased stretch (polar residues) spans 275–296; it reads SSIFSDSQAVTTDDEGISSTAG.

This sequence belongs to the ThrE exporter (TC 2.A.79) family.

This is an uncharacterized protein from Saccharomyces cerevisiae (strain ATCC 204508 / S288c) (Baker's yeast).